Reading from the N-terminus, the 612-residue chain is Proline-rich protein 14 (612 aa).

An N-acetylmethionine modification is found at Met-1. Polar residues-rich tracts occupy residues 1 to 15 (MDLPGNSSPFTQPSL) and 86 to 96 (VCTQSPALPSQ). Disordered stretches follow at residues 1 to 48 (MDLP…EKAS), 65 to 96 (VPLTHKEDTPSPLTHNHHQDPVCTQSPALPSQ), 119 to 150 (RARQSSPALRMRSRAASGPEESPSKKTDQVPQ), and 206 to 256 (PTLT…PALE). The interval 1-135 (MDLPGNSSPF…ALRMRSRAAS (135 aa)) is sufficient for heterochromatin association in interphase and chromatin association in anaphase. A required for the interaction with GRB2 and sufficient to promote the phosphorylation of AKT and cell proliferation region spans residues 85–405 (PVCTQSPALP…MARTPPPPRP (321 aa)). Residues 136-392 (GPEESPSKKT…QSRPRRHTVG (257 aa)) form a required for nuclear lamina association region. A compositionally biased stretch (pro residues) spans 243–252 (ADPPESPVPD). Ser-307 carries the post-translational modification Phosphoserine. Disordered stretches follow at residues 323-405 (QSRA…PPRP), 444-463 (LGSTKGKELRASKDKVFSDP), and 553-583 (DSSLPRSRRPSRGVRTAASRTLTPNLAPSQD). Positions 342-359 (WRTQCNSLAPVSKSSLGR) are enriched in polar residues. The segment covering 366–379 (LGPPDPGSWPPVPS) has biased composition (pro residues). Residues 448–463 (KGKELRASKDKVFSDP) show a composition bias toward basic and acidic residues. Residues 546 to 563 (RRAVEFRDSSLPRSRRPS) are required for nuclear localization. Residues 570-583 (ASRTLTPNLAPSQD) show a composition bias toward polar residues.

Interacts (via proline-rich region) with GRB2 (via SH3 domain 2). Interacts (via N-terminus) with CBX5.

It localises to the chromosome. The protein resides in the nucleus. The protein localises to the nucleus lamina. Its subcellular location is the nucleoplasm. Functionally, functions in tethering peripheral heterochromatin to the nuclear lamina during interphase, possibly through the interaction with heterochromatin protein CBX5/HP1 alpha. Might play a role in reattaching heterochromatin to the nuclear lamina at mitotic exit. Promotes myoblast differentiation during skeletal myogenesis, possibly by stimulating transcription factor MyoD activity via binding to CBX5/HP1 alpha. Involved in the positive regulation of the PI3K-Akt-mTOR signaling pathway and in promoting cell proliferation, possibly via binding to GRB2. The sequence is that of Proline-rich protein 14 (Prr14) from Mus musculus (Mouse).